The following is a 20-amino-acid chain: Beta-fibrinogenase jerdofibrase (20 aa).

Positions 1–20 (VIGGDECNINEHPFLVLVYY) constitute a Peptidase S1 domain.

Belongs to the peptidase S1 family. Snake venom subfamily. In terms of assembly, monomer. In terms of tissue distribution, expressed by the venom gland.

Its subcellular location is the secreted. Its activity is regulated as follows. Inhibited by PMSF and soybean trypsin inhibitor. Partially inhibited by DTT and cysteine. Not affected by EDTA. Fibrin(ogen)olytic serine protease degrades Bbeta-chain of human fibrinogen (FGB) and shows a lower activity on Aa-chain (FGA). Also degrades fibrin directly. Releases fibrinopeptide B and a small amount of fibrinopeptide A. Has also be shown to catalyze the hydrolysis of some chromogenic substrates such as S2238, S2160, S2302 and S2251. In Protobothrops jerdonii (Jerdon's pitviper), this protein is Beta-fibrinogenase jerdofibrase.